The primary structure comprises 270 residues: Methylthioribulose-1-phosphate dehydratase (270 aa).

C122 lines the substrate pocket. Residues H140 and H142 each coordinate Zn(2+). The Proton donor/acceptor role is filled by E165. H230 contacts Zn(2+).

This sequence belongs to the aldolase class II family. MtnB subfamily. Requires Zn(2+) as cofactor.

The protein resides in the cytoplasm. It catalyses the reaction 5-(methylsulfanyl)-D-ribulose 1-phosphate = 5-methylsulfanyl-2,3-dioxopentyl phosphate + H2O. It functions in the pathway amino-acid biosynthesis; L-methionine biosynthesis via salvage pathway; L-methionine from S-methyl-5-thio-alpha-D-ribose 1-phosphate: step 2/6. Functionally, catalyzes the dehydration of methylthioribulose-1-phosphate (MTRu-1-P) into 2,3-diketo-5-methylthiopentyl-1-phosphate (DK-MTP-1-P). The sequence is that of Methylthioribulose-1-phosphate dehydratase from Candida albicans (strain SC5314 / ATCC MYA-2876) (Yeast).